Consider the following 460-residue polypeptide: NADH-ubiquinone oxidoreductase chain 4 (460 aa).

The next 13 membrane-spanning stretches (helical) occupy residues 20 to 42, 61 to 81, 94 to 113, 117 to 139, 148 to 168, 195 to 215, 225 to 245, 258 to 278, 285 to 304, 308 to 330, 351 to 371, 394 to 414, and 436 to 456; these read AKWL…LSWL, PLST…ILAS, RAYI…AFGA, IMFY…RWGN, TYFL…LLLM, LWWA…GVHL, PIAG…YGMM, LAYP…SICL, SLIA…GILI, WGFT…LFCL, MILP…LALP, LILT…LFLM, and LLII…ELMW.

It belongs to the complex I subunit 4 family.

Its subcellular location is the mitochondrion membrane. It carries out the reaction a ubiquinone + NADH + 5 H(+)(in) = a ubiquinol + NAD(+) + 4 H(+)(out). Core subunit of the mitochondrial membrane respiratory chain NADH dehydrogenase (Complex I) that is believed to belong to the minimal assembly required for catalysis. Complex I functions in the transfer of electrons from NADH to the respiratory chain. The immediate electron acceptor for the enzyme is believed to be ubiquinone. This chain is NADH-ubiquinone oxidoreductase chain 4 (MT-ND4), found in Oncorhynchus mykiss (Rainbow trout).